Reading from the N-terminus, the 807-residue chain is Oxysterol-binding protein 1 (807 aa).

Residue Ala2 is modified to N-acetylalanine. Positions 61–86 (GAGGVAAAGPAPAPPTGGSGGSGAGG) are disordered. The segment covering 77-86 (GGSGGSGAGG) has biased composition (gly residues). Residues 88-181 (GSAREGWLFK…WVTALELAKA (94 aa)) enclose the PH domain. An a 1,2-diacyl-sn-glycero-3-phospho-(1D-myo-inositol 4-phosphate)-binding site is contributed by 117–122 (LSYYRS). Ser190, Ser193, Ser198, Ser238, and Ser240 each carry phosphoserine. Residues 291-326 (QKSLQYERDQRIRLEETLEQLAKQHNHLERAFRGAT) are a coiled coil. Residue Gln314 coordinates 20-hydroxycholesterol. Gln314 serves as a coordination point for 25-hydroxycholesterol. Residue Gln314 coordinates 7beta-hydroxycholesterol. Cholesterol is bound at residue Gln314. Ergosterol is bound at residue Gln314. Positions 329 to 353 (PANTPGNVGSGKDQCCSGKGDMSDE) are disordered. 3 positions are modified to phosphoserine: Ser338, Ser345, and Ser351. Positions 358-364 (EFFDAPE) match the FFAT motif. Thr377 is modified (phosphothreonine). Ser379, Ser382, Ser385, Ser386, and Ser389 each carry phosphoserine. A 1,2-diacyl-sn-glycero-3-phospho-(1D-myo-inositol 4-phosphate) is bound by residues 493-496 (KPFN) and 522-523 (HH). A disordered region spans residues 710 to 759 (TAPTDSRLRPDQRLMENGRWDEANAEKQRLEEKQRLSRKKREAEAMKATE). The span at 715-759 (SRLRPDQRLMENGRWDEANAEKQRLEEKQRLSRKKREAEAMKATE) shows a compositional bias: basic and acidic residues. Residues 730–760 (DEANAEKQRLEEKQRLSRKKREAEAMKATED) adopt a coiled-coil conformation.

Belongs to the OSBP family. Homodimer or homotrimer. Interacts (via FFAT motif) with VAPA. Interacts (via C-terminus) with RELCH (via the third HEAT repeat). Found in a complex composed of RELCH, OSBP1 and RAB11A. In terms of tissue distribution, widely expressed.

The protein localises to the cytoplasm. It localises to the cytosol. The protein resides in the perinuclear region. It is found in the golgi apparatus membrane. Its subcellular location is the endoplasmic reticulum membrane. The protein localises to the golgi apparatus. It localises to the trans-Golgi network. In terms of biological role, lipid transporter involved in lipid countertransport between the Golgi complex and membranes of the endoplasmic reticulum: specifically exchanges sterol with phosphatidylinositol 4-phosphate (PI4P), delivering sterol to the Golgi in exchange for PI4P, which is degraded by the SAC1/SACM1L phosphatase in the endoplasmic reticulum. Binds cholesterol and a range of oxysterols including 25-hydroxycholesterol. Cholesterol binding promotes the formation of a complex with PP2A and a tyrosine phosphatase which dephosphorylates ERK1/2, whereas 25-hydroxycholesterol causes its disassembly. Regulates cholesterol efflux by decreasing ABCA1 stability. In Homo sapiens (Human), this protein is Oxysterol-binding protein 1.